The primary structure comprises 245 residues: tRNA1(Val) (adenine(37)-N6)-methyltransferase (245 aa).

It belongs to the methyltransferase superfamily. tRNA (adenine-N(6)-)-methyltransferase family.

Its subcellular location is the cytoplasm. It carries out the reaction adenosine(37) in tRNA1(Val) + S-adenosyl-L-methionine = N(6)-methyladenosine(37) in tRNA1(Val) + S-adenosyl-L-homocysteine + H(+). Functionally, specifically methylates the adenine in position 37 of tRNA(1)(Val) (anticodon cmo5UAC). The polypeptide is tRNA1(Val) (adenine(37)-N6)-methyltransferase (Escherichia coli O6:K15:H31 (strain 536 / UPEC)).